The following is a 175-amino-acid chain: Short chain dehydrogenase/reductase dpmpG (175 aa).

4 residues coordinate NADP(+): Ile-18, Asp-71, Asn-98, and Lys-132.

It belongs to the short-chain dehydrogenases/reductases (SDR) family.

It participates in secondary metabolite biosynthesis; terpenoid biosynthesis. Functionally, short chain dehydrogenase/reductase; part of the gene cluster that mediates the biosynthesis of diterpenoid pyrones. The first step of the pathway is the synthesis of the alpha-pyrone moiety by the polyketide synthase dpmpA via condensation of one acetyl-CoA starter unit with 3 malonyl-CoA units and 2 methylations. The alpha-pyrone is then combined with geranylgeranyl pyrophosphate (GGPP) formed by the GGPP synthase dpmpD through the action of the prenyltransferase dpmpC to yield a linear alpha-pyrone diterpenoid. Subsequent steps in the diterpenoid pyrone biosynthetic pathway involve the decalin core formation, which is initiated by the epoxidation of the C10-C11 olefin by the FAD-dependent oxidoreductase dpmpE, and is followed by a cyclization cascade catalyzed by the terpene cyclase dpmpB. The short chain dehydrogenase/reductase dpmpG then oxidizes the 8S hydroxy group to a ketone and the short chain dehydrogenase/reductase dpmpH reduces the ketone to the 8R hydroxy group to yield higginsianin B. Higginsianin B is further methylated by the methyltransferase dpmpI to produce the intermediate named FDDP B. The cytochrome P450 monooxygenase dpmpJ then oxidizes the C-26 methyl to primary alcohol, producing the final diterpenoid pyrone with a C-26 primary alcohol on the gamma-pyrone moiety named FDDP C. The protein is Short chain dehydrogenase/reductase dpmpG of Macrophomina phaseolina (strain MS6) (Charcoal rot fungus).